The sequence spans 482 residues: Putative fatty acid desaturase 2-like protein FADS2B (482 aa).

Residues 1-31 form a disordered region; the sequence is MKFEEKCGDNGSIVGRNQSYPGEKHQPKGKP. Topologically, residues 1–167 are cytoplasmic; that stretch reads MKFEEKCGDN…EAMNMFHANL (167 aa). Residues 56 to 132 form the Cytochrome b5 heme-binding domain; sequence LSMYTWLEIQ…LKPLLIGELA (77 aa). Positions 90 and 113 each coordinate heme. Residues 168 to 188 form a helical membrane-spanning segment; sequence GFFFLHFVQILILEVLAWLIV. Topologically, residues 189–190 are lumenal; sequence YH. Residues 191-211 form a helical membrane-spanning segment; that stretch reads FGSGWPVTMFISFLLTISQAS. Topologically, residues 212–305 are cytoplasmic; that stretch reads SSFLQHDAGH…YEEQHLYFYK (94 aa). The Histidine box-1 signature appears at 217–221; the sequence is HDAGH. The Histidine box-2 signature appears at 254–258; it reads HFEQH. Residues 306 to 326 form a helical membrane-spanning segment; sequence VWLPLFMPVYLKLPSMQAMYL. Residues 327–343 are Lumenal-facing; it reads QRYWVCFSLQDITWVSS. Residues 344-364 form a helical membrane-spanning segment; that stretch reads FYIYFITFGLYYGIFGTMLLI. At 365-482 the chain is on the cytoplasmic side; that stretch reads YLVKFLESPW…AALWADAYYE (118 aa). Residues 421-425 carry the Histidine box-3 motif; that stretch reads QIEHH.

It belongs to the fatty acid desaturase type 1 family.

The protein resides in the endoplasmic reticulum membrane. Its pathway is lipid metabolism; polyunsaturated fatty acid biosynthesis. The sequence is that of Putative fatty acid desaturase 2-like protein FADS2B from Homo sapiens (Human).